The following is a 399-amino-acid chain: Beta-1,6-galactosyltransferase GALT31A (399 aa).

At 1–12 the chain is on the cytoplasmic side; the sequence is MGMGRYQKSATS. The chain crosses the membrane as a helical; Signal-anchor for type II membrane protein span at residues 13–35; it reads GVSARWVFVLCISSFLLGVLVVN. Residues 36-399 lie on the Lumenal side of the membrane; that stretch reads RLLASFETVD…GDGAIWHSSF (364 aa).

The protein belongs to the glycosyltransferase 31 family. In terms of assembly, interacts with GALT29A. Mn(2+) serves as cofactor.

It localises to the golgi apparatus membrane. It participates in protein modification; protein glycosylation. Functionally, beta-galactosyltransferase involved in elongation of beta-1,6-linked galactan side chains on arabinogalactan proteins. Required for the progression of embryogenesis beyond the globular stage. Beta-galactosyltransferase involved in the biosynthesis of type II arabinogalactan. Transfers galactose from UDP-galactose to a mixture of various oligosaccharides derived from arabinogalactan proteins. Forms a complex with GALT29A that can work cooperatively to enhance the activities of adding galactose residues at O6 positions to beta-1,6-linked galactan and beta-1,3-linked galactan. The chain is Beta-1,6-galactosyltransferase GALT31A from Arabidopsis thaliana (Mouse-ear cress).